The sequence spans 502 residues: Hexokinase-2 (502 aa).

Residues 4–24 (VAVATTVVCSVAVCAAAALIV) form a helical membrane-spanning segment. In terms of domain architecture, Hexokinase spans 35-487 (ARVIEILKAF…SGVGAALLAA (453 aa)). Residues 90–228 (SGDETGFFYA…GLDMLVAALV (139 aa)) are hexokinase small subdomain. Residues glycine 104, threonine 105, and asparagine 106 each contribute to the ADP site. Residues threonine 194, lysine 195, asparagine 229, and aspartate 230 each coordinate D-glucose. The hexokinase large subdomain stretch occupies residues 229-476 (NDTIGTLAGG…ESVEVILSND (248 aa)). Threonine 253 provides a ligand contact to ADP. D-glucose is bound by residues asparagine 256, glutamate 284, and glutamate 315. Glycine 441 contacts ADP.

This sequence belongs to the hexokinase family. In terms of tissue distribution, highly expressed in siliques, at intermediate levels in roots and flowers, and at lower levels in stems, rosette and cauline leaves.

Its subcellular location is the mitochondrion outer membrane. It catalyses the reaction a D-hexose + ATP = a D-hexose 6-phosphate + ADP + H(+). The enzyme catalyses D-fructose + ATP = D-fructose 6-phosphate + ADP + H(+). It carries out the reaction D-glucose + ATP = D-glucose 6-phosphate + ADP + H(+). It participates in carbohydrate metabolism; hexose metabolism. Its pathway is carbohydrate degradation; glycolysis; D-glyceraldehyde 3-phosphate and glycerone phosphate from D-glucose: step 1/4. Its function is as follows. Fructose and glucose phosphorylating enzyme. May be involved in the phosphorylation of glucose during the export from mitochondrion to cytosol. Acts as a sugar sensor which may regulate sugar-dependent gene repression or activation. Mediates the effects of sugar on plant growth and development independently of its catalytic activity or the sugar metabolism. May regulate the execution of program cell death in plant cells. The chain is Hexokinase-2 (HXK2) from Arabidopsis thaliana (Mouse-ear cress).